A 449-amino-acid polypeptide reads, in one-letter code: MGKEKFHINIVVIGHVDSGKSTTTGHLIYKLGGIDKRVIERFEKEAAEMNKRSFKYAWVLDKLKAERERGITIDIALWKFETTKYYCTVIDAPGHRDFIKNMITGTSQADCAVLIIDSTTGGFEAGISKDGQTREHALLAFTLGVKQMICCCNKMDATTPKYSKARYDEIIKEVSSYLKKVGYNPDKIPFVPISGFEGDNMIERSTNLDWYKGPTLLEALDQINEPKRPSDKPLRLPLQDVYKIGGIGTVPVGRVETGMIKPGMVVTFAPTGLTTEVKSVEMHHESLLEALPGDNVGFNVKNVAVKDLKRGYVASNSKDDPAKGAANFTSQVIIMNHPGQIGNGYAPVLDCHTSHIAVKFSEILTKIDRRSGKEIEKEPKFLKNGDAGMVKMTPTKPMVVETFSEYPPLGRFAVRDMRQTVAVGVIKSVDKKDPTGAKVTKAAVKKGAK.

The region spanning 5–230 (KFHINIVVIG…DQINEPKRPS (226 aa)) is the tr-type G domain. Residues 14-21 (GHVDSGKS) are G1. 14–21 (GHVDSGKS) is a binding site for GTP. The residue at position 55 (lysine 55) is an N6,N6-dimethyllysine. The G2 stretch occupies residues 70–74 (GITID). Residue lysine 79 is modified to N6,N6,N6-trimethyllysine. A G3 region spans residues 91–94 (DAPG). Residues 91-95 (DAPGH) and 153-156 (NKMD) contribute to the GTP site. Residues 153–156 (NKMD) are G4. Lysine 187 carries the N6,N6,N6-trimethyllysine modification. The G5 stretch occupies residues 194-196 (SGF). Lysine 261 carries the post-translational modification N6-methyllysine. Lysine 306 and lysine 396 each carry N6,N6,N6-trimethyllysine. Residues lysine 438 and lysine 441 each participate in a glycyl lysine isopeptide (Lys-Gly) (interchain with G-Cter in ubiquitin) cross-link.

This sequence belongs to the TRAFAC class translation factor GTPase superfamily. Classic translation factor GTPase family. EF-Tu/EF-1A subfamily.

It localises to the cytoplasm. Its function is as follows. This protein promotes the GTP-dependent binding of aminoacyl-tRNA to the A-site of ribosomes during protein biosynthesis. This Arabidopsis thaliana (Mouse-ear cress) protein is Elongation factor 1-alpha 1 (A1).